The sequence spans 281 residues: Proline iminopeptidase PfmaB (281 aa).

The 245-residue stretch at 23–267 (PLVITLHGGR…NANHSVHVEK (245 aa)) folds into the AB hydrolase-1 domain.

This sequence belongs to the peptidase S33 family.

The catalysed reaction is Release of N-terminal proline from a peptide.. Functionally, proline iminopeptidase; part of the gene cluster that mediates the biosynthesis of dihydroxynaphthalene (DHN)-melanin, a bluish-green pigment forming a dark layer in the conidial wall that protects the conidia from UV radiations. The first step of the pathway is the production of the pentaketide 1,3,6,8-tetrahydroxynaphthalene (1,3,6,8-THN or T4HN) by the polyketide synthase PfmaE though condensation of acetyl-CoA with malonyl-CoA. T4HN is not stable and easily oxidizes into the stable form flaviolin. T4HN is also substrate of the hydroxynaphthalene reductase PfmaG to yield scytalone. The scytalone dehydratase PfmaJ then reduces scytalone to 1,3,8-THN. 1,3,8-THN is then substrate of the hydroxynaphthalene reductase PfmaI to yield vermelone. Vermelone is further converted by the multicopper oxidase PfmaD to 1,8-DHN. Finally the laccase PFICI_06862 transforms 1,8-DHN to DHN-melanin. The roles of the 5-oxoprolinase PfmaA and the proline iminopeptidase PfmaB within the cluster have not been elucidated yet. This Pestalotiopsis fici (strain W106-1 / CGMCC3.15140) protein is Proline iminopeptidase PfmaB.